The primary structure comprises 475 residues: Sulfate adenylyltransferase subunit 1 (475 aa).

The 215-residue stretch at 25-239 (KSLLRFLTCG…EVLETVEIQR (215 aa)) folds into the tr-type G domain. Residues 34-41 (GSVDDGKS) are G1. Residue 34-41 (GSVDDGKS) coordinates GTP. The tract at residues 92 to 96 (GITID) is G2. Positions 113 to 116 (DTPG) are G3. Residues 113 to 117 (DTPGH) and 168 to 171 (NKMD) contribute to the GTP site. The interval 168–171 (NKMD) is G4. Residues 206–208 (SAL) are G5.

The protein belongs to the TRAFAC class translation factor GTPase superfamily. Classic translation factor GTPase family. CysN/NodQ subfamily. As to quaternary structure, heterodimer composed of CysD, the smaller subunit, and CysN.

The catalysed reaction is sulfate + ATP + H(+) = adenosine 5'-phosphosulfate + diphosphate. It participates in sulfur metabolism; hydrogen sulfide biosynthesis; sulfite from sulfate: step 1/3. Functionally, with CysD forms the ATP sulfurylase (ATPS) that catalyzes the adenylation of sulfate producing adenosine 5'-phosphosulfate (APS) and diphosphate, the first enzymatic step in sulfur assimilation pathway. APS synthesis involves the formation of a high-energy phosphoric-sulfuric acid anhydride bond driven by GTP hydrolysis by CysN coupled to ATP hydrolysis by CysD. This chain is Sulfate adenylyltransferase subunit 1, found in Escherichia fergusonii (strain ATCC 35469 / DSM 13698 / CCUG 18766 / IAM 14443 / JCM 21226 / LMG 7866 / NBRC 102419 / NCTC 12128 / CDC 0568-73).